The sequence spans 160 residues: Photosystem II extrinsic protein V (160 aa).

The signal sequence occupies residues 1–25 (MKRFFLVAIASVLFFFNTMVGSANA). Cys-62, Cys-65, His-66, and His-117 together coordinate heme c.

Belongs to the cytochrome c family. PsbV subfamily. As to quaternary structure, PSII is composed of 1 copy each of membrane proteins PsbA, PsbB, PsbC, PsbD, PsbE, PsbF, PsbH, PsbI, PsbJ, PsbK, PsbL, PsbM, PsbT, PsbX, PsbY, PsbZ, Psb30/Ycf12, peripheral proteins PsbO, CyanoQ (PsbQ), PsbU, PsbV and a large number of cofactors. It forms dimeric complexes. The cyanobacterial oxygen-evolving complex is composed of PsbO, CyanoQ (PsbQ), PsbV and PsbU. The cofactor is heme c.

Its subcellular location is the cellular thylakoid membrane. One of the extrinsic, lumenal subunits of photosystem II (PSII). PSII is a light-driven water plastoquinone oxidoreductase, using light energy to abstract electrons from H(2)O, generating a proton gradient subsequently used for ATP formation. The extrinsic proteins stabilize the structure of photosystem II oxygen-evolving complex (OEC), the ion environment of oxygen evolution and protect the OEC against heat-induced inactivation. Low-potential cytochrome c that plays a role in the OEC of PSII, required for normal function or stabilization of PSII. The chain is Photosystem II extrinsic protein V from Synechocystis sp. (strain ATCC 27184 / PCC 6803 / Kazusa).